Reading from the N-terminus, the 201-residue chain is 8-oxoguanine DNA glycosylase/AP lyase (201 aa).

Catalysis depends on residues lysine 126 and aspartate 144.

The protein belongs to the type-2 OGG1 family.

The catalysed reaction is 2'-deoxyribonucleotide-(2'-deoxyribose 5'-phosphate)-2'-deoxyribonucleotide-DNA = a 3'-end 2'-deoxyribonucleotide-(2,3-dehydro-2,3-deoxyribose 5'-phosphate)-DNA + a 5'-end 5'-phospho-2'-deoxyribonucleoside-DNA + H(+). Functionally, catalyzes the excision of an oxidatively damaged form of guanine (7,8-dihydro-8-oxoguanine = 8-oxoG) from DNA. Also cleaves the DNA backbone at apurinic/apyrimidinic sites (AP sites). The protein is 8-oxoguanine DNA glycosylase/AP lyase of Metallosphaera sedula (strain ATCC 51363 / DSM 5348 / JCM 9185 / NBRC 15509 / TH2).